The sequence spans 638 residues: 1-deoxy-D-xylulose-5-phosphate synthase (638 aa).

Thiamine diphosphate contacts are provided by residues histidine 74 and 115–117; that span reads GHS. A Mg(2+)-binding site is contributed by aspartate 146. Thiamine diphosphate-binding positions include 147-148, asparagine 175, tyrosine 286, and glutamate 366; that span reads GA. A Mg(2+)-binding site is contributed by asparagine 175.

It belongs to the transketolase family. DXPS subfamily. As to quaternary structure, homodimer. It depends on Mg(2+) as a cofactor. The cofactor is thiamine diphosphate.

It catalyses the reaction D-glyceraldehyde 3-phosphate + pyruvate + H(+) = 1-deoxy-D-xylulose 5-phosphate + CO2. It participates in metabolic intermediate biosynthesis; 1-deoxy-D-xylulose 5-phosphate biosynthesis; 1-deoxy-D-xylulose 5-phosphate from D-glyceraldehyde 3-phosphate and pyruvate: step 1/1. In terms of biological role, catalyzes the acyloin condensation reaction between C atoms 2 and 3 of pyruvate and glyceraldehyde 3-phosphate to yield 1-deoxy-D-xylulose-5-phosphate (DXP). The chain is 1-deoxy-D-xylulose-5-phosphate synthase from Syntrophomonas wolfei subsp. wolfei (strain DSM 2245B / Goettingen).